A 234-amino-acid chain; its full sequence is Thiamine-phosphate synthase (234 aa).

4-amino-2-methyl-5-(diphosphooxymethyl)pyrimidine-binding positions include 65–69 (QYRNK) and asparagine 97. Positions 98 and 117 each coordinate Mg(2+). Serine 136 serves as a coordination point for 4-amino-2-methyl-5-(diphosphooxymethyl)pyrimidine. 163–165 (SHT) is a 2-[(2R,5Z)-2-carboxy-4-methylthiazol-5(2H)-ylidene]ethyl phosphate binding site. Lysine 166 lines the 4-amino-2-methyl-5-(diphosphooxymethyl)pyrimidine pocket. Residues glycine 192 and 212–213 (IS) each bind 2-[(2R,5Z)-2-carboxy-4-methylthiazol-5(2H)-ylidene]ethyl phosphate.

The protein belongs to the thiamine-phosphate synthase family. Mg(2+) is required as a cofactor.

It catalyses the reaction 2-[(2R,5Z)-2-carboxy-4-methylthiazol-5(2H)-ylidene]ethyl phosphate + 4-amino-2-methyl-5-(diphosphooxymethyl)pyrimidine + 2 H(+) = thiamine phosphate + CO2 + diphosphate. It carries out the reaction 2-(2-carboxy-4-methylthiazol-5-yl)ethyl phosphate + 4-amino-2-methyl-5-(diphosphooxymethyl)pyrimidine + 2 H(+) = thiamine phosphate + CO2 + diphosphate. The enzyme catalyses 4-methyl-5-(2-phosphooxyethyl)-thiazole + 4-amino-2-methyl-5-(diphosphooxymethyl)pyrimidine + H(+) = thiamine phosphate + diphosphate. Its pathway is cofactor biosynthesis; thiamine diphosphate biosynthesis; thiamine phosphate from 4-amino-2-methyl-5-diphosphomethylpyrimidine and 4-methyl-5-(2-phosphoethyl)-thiazole: step 1/1. Condenses 4-methyl-5-(beta-hydroxyethyl)thiazole monophosphate (THZ-P) and 2-methyl-4-amino-5-hydroxymethyl pyrimidine pyrophosphate (HMP-PP) to form thiamine monophosphate (TMP). This chain is Thiamine-phosphate synthase, found in Xylella fastidiosa (strain Temecula1 / ATCC 700964).